The following is a 172-amino-acid chain: MAALASLGALALLLLSGLSCCSEACVEPQITPSYYTTSDAVISTETVFIVEISLTCKNRVQNMALYADVSGKQFPVTRGQDVGRYQVSWSLDHKSAHAGTYEVRFFDEESYSLLRKAQRNNEDVSVIPPLFTVSVDHRGTWNGPWVSTEVLAAAIGLVIYYLAFSAKSHIQA.

The signal sequence occupies residues 1–24 (MAALASLGALALLLLSGLSCCSEA). C25 and C56 are joined by a disulfide. Topologically, residues 25–143 (CVEPQITPSY…SVDHRGTWNG (119 aa)) are lumenal. Residue K72 forms a Glycyl lysine isopeptide (Lys-Gly) (interchain with G-Cter in ubiquitin) linkage. Residues 144-164 (PWVSTEVLAAAIGLVIYYLAF) form a helical membrane-spanning segment. Residues 165–172 (SAKSHIQA) are Cytoplasmic-facing.

Belongs to the TRAP-delta family. Heterotetramer of TRAP-alpha, TRAP-beta, TRAP-delta and TRAP-gamma.

The protein localises to the endoplasmic reticulum membrane. Functionally, TRAP proteins are part of a complex whose function is to bind calcium to the ER membrane and thereby regulate the retention of ER resident proteins. In Bos taurus (Bovine), this protein is Translocon-associated protein subunit delta (SSR4).